Consider the following 235-residue polypeptide: Sugar fermentation stimulation protein homolog (235 aa).

It belongs to the SfsA family.

The chain is Sugar fermentation stimulation protein homolog from Serratia proteamaculans (strain 568).